Consider the following 422-residue polypeptide: 3-carboxy-cis,cis-muconate cycloisomerase (422 aa).

The protein belongs to the class-II fumarase/aspartase family. Homotetramer.

It localises to the cytoplasm. It catalyses the reaction 2-(carboxymethyl)-5-oxo-2,5-dihydro-2-furoate = 3-carboxy-cis,cis-muconate + H(+). The protein operates within aromatic compound metabolism; beta-ketoadipate pathway; 5-oxo-4,5-dihydro-2-furylacetate from 3-carboxy-cis,cis-muconate: step 1/2. Its function is as follows. Catalyzes an anti cycloisomerization. The sequence is that of 3-carboxy-cis,cis-muconate cycloisomerase (pcaB) from Pseudomonas putida (Arthrobacter siderocapsulatus).